Consider the following 167-residue polypeptide: 6,7-dimethyl-8-ribityllumazine synthase (167 aa).

5-amino-6-(D-ribitylamino)uracil is bound by residues F23, 57 to 59 (TYE), and 81 to 83 (AVI). A (2S)-2-hydroxy-3-oxobutyl phosphate-binding site is contributed by 86 to 87 (GT). The active-site Proton donor is the H89. A 5-amino-6-(D-ribitylamino)uracil-binding site is contributed by F119. R133 contributes to the (2S)-2-hydroxy-3-oxobutyl phosphate binding site.

It belongs to the DMRL synthase family.

It catalyses the reaction (2S)-2-hydroxy-3-oxobutyl phosphate + 5-amino-6-(D-ribitylamino)uracil = 6,7-dimethyl-8-(1-D-ribityl)lumazine + phosphate + 2 H2O + H(+). Its pathway is cofactor biosynthesis; riboflavin biosynthesis; riboflavin from 2-hydroxy-3-oxobutyl phosphate and 5-amino-6-(D-ribitylamino)uracil: step 1/2. Catalyzes the formation of 6,7-dimethyl-8-ribityllumazine by condensation of 5-amino-6-(D-ribitylamino)uracil with 3,4-dihydroxy-2-butanone 4-phosphate. This is the penultimate step in the biosynthesis of riboflavin. This is 6,7-dimethyl-8-ribityllumazine synthase from Myxococcus xanthus (strain DK1622).